A 218-amino-acid chain; its full sequence is Large ribosomal subunit protein uL3 (218 aa).

Position 154 is an N5-methylglutamine (Gln154).

It belongs to the universal ribosomal protein uL3 family. As to quaternary structure, part of the 50S ribosomal subunit. Forms a cluster with proteins L14 and L19. In terms of processing, methylated by PrmB.

In terms of biological role, one of the primary rRNA binding proteins, it binds directly near the 3'-end of the 23S rRNA, where it nucleates assembly of the 50S subunit. This Polynucleobacter asymbioticus (strain DSM 18221 / CIP 109841 / QLW-P1DMWA-1) (Polynucleobacter necessarius subsp. asymbioticus) protein is Large ribosomal subunit protein uL3.